Reading from the N-terminus, the 210-residue chain is Protein MSO1 (210 aa).

Met1 is modified (N-acetylmethionine). An N-acetylserine modification is found at Met2. The interval 88-210 (KHDMKKQNSR…LKRRNNDYGF (123 aa)) is disordered. Ser102 is subject to Phosphoserine. Over residues 117–141 (TPSSNGNTPEYTPASKSFQDIYNNH) the composition is skewed to polar residues. 2 stretches are compositionally biased toward low complexity: residues 142 to 161 (TSSSSATPRRASSRPTRPSA) and 172 to 183 (SKTSNSFNTSST).

In terms of assembly, interacts physically with SEC1.

Functionally, involved in secretion. Component of the secretory vesicle docking complex. This Saccharomyces cerevisiae (strain ATCC 204508 / S288c) (Baker's yeast) protein is Protein MSO1 (MSO1).